Reading from the N-terminus, the 206-residue chain is Protein SUE1, mitochondrial (206 aa).

The N-terminal 24 residues, 1–24, are a transit peptide targeting the mitochondrion; the sequence is MILLKRTKIRGVSVSFVSLQRRTH.

Its subcellular location is the mitochondrion envelope. Required for degradation of unstable forms of cytochrome c. This chain is Protein SUE1, mitochondrial, found in Saccharomyces cerevisiae (strain ATCC 204508 / S288c) (Baker's yeast).